Here is a 73-residue protein sequence, read N- to C-terminus: MTLTKSAVLILVLLLAFDNFADVQPGLITMGGGRLSNLLSKRVSIWFCASRTCSTPADCNPCTCESGVCVDWL.

The signal sequence occupies residues 1 to 23; the sequence is MTLTKSAVLILVLLLAFDNFADV. Positions 24-40 are excised as a propeptide; sequence QPGLITMGGGRLSNLLS. 3 disulfides stabilise this stretch: Cys-48/Cys-62, Cys-53/Cys-64, and Cys-59/Cys-69.

This sequence belongs to the conotoxin P superfamily. Expressed by the venom duct.

The protein localises to the secreted. Probable neurotoxin that inhibits ion channels. This chain is Conotoxin Lt9a, found in Conus litteratus (Lettered cone).